A 204-amino-acid polypeptide reads, in one-letter code: Imidazoleglycerol-phosphate dehydratase (204 aa).

Residues 183-204 are disordered; the sequence is DPRMDGITPSTKGTLSESGDSQ. Positions 190–204 are enriched in polar residues; it reads TPSTKGTLSESGDSQ.

This sequence belongs to the imidazoleglycerol-phosphate dehydratase family.

The protein resides in the cytoplasm. It carries out the reaction D-erythro-1-(imidazol-4-yl)glycerol 3-phosphate = 3-(imidazol-4-yl)-2-oxopropyl phosphate + H2O. It functions in the pathway amino-acid biosynthesis; L-histidine biosynthesis; L-histidine from 5-phospho-alpha-D-ribose 1-diphosphate: step 6/9. The chain is Imidazoleglycerol-phosphate dehydratase from Alcanivorax borkumensis (strain ATCC 700651 / DSM 11573 / NCIMB 13689 / SK2).